Here is a 269-residue protein sequence, read N- to C-terminus: uncharacterized protein (269 aa).

Residues 152–197 (RYFSKPAYRNAFKANTIRATTAYKKVFNDPSLGSTYPLEVPLGKMS) enclose the RPE1 insert domain.

This is an uncharacterized protein from Rickettsia prowazekii (strain Madrid E).